A 558-amino-acid polypeptide reads, in one-letter code: Delta-1-pyrroline-5-carboxylate dehydrogenase, mitochondrial (558 aa).

Residues S198, K223, and 276-280 (GSTGV) contribute to the NAD(+) site. E306 functions as the Proton acceptor in the catalytic mechanism. The Nucleophile role is filled by C340. E438 provides a ligand contact to NAD(+).

The protein belongs to the aldehyde dehydrogenase family.

The protein localises to the mitochondrion matrix. The enzyme catalyses L-glutamate 5-semialdehyde + NAD(+) + H2O = L-glutamate + NADH + 2 H(+). The protein operates within amino-acid degradation; L-proline degradation into L-glutamate; L-glutamate from L-proline: step 2/2. In terms of biological role, irreversible conversion of delta-1-pyrroline-5-carboxylate (P5C), derived either from proline or ornithine, to glutamate. This is a necessary step in the pathway interconnecting the urea and tricarboxylic acid cycles. This is Delta-1-pyrroline-5-carboxylate dehydrogenase, mitochondrial from Dictyostelium discoideum (Social amoeba).